We begin with the raw amino-acid sequence, 674 residues long: L-type lectin-domain containing receptor kinase IV.3 (674 aa).

The first 22 residues, 1 to 22, serve as a signal peptide directing secretion; sequence MFFKLFTIFFFFIILLSKPLNS. 6 N-linked (GlcNAc...) asparagine glycosylation sites follow: asparagine 21, asparagine 28, asparagine 40, asparagine 81, asparagine 136, and asparagine 188. Residues 23–296 lie on the Extracellular side of the membrane; that stretch reads SSQSLNFTYN…TSLQRFYKNR (274 aa). The legume-lectin like stretch occupies residues 26-263; that stretch reads SLNFTYNSFH…SEHFVFGWSF (238 aa). Residues 297–317 traverse the membrane as a helical segment; it reads MPLFSLLLIPVLFVVSLIFLV. Residues 318–674 lie on the Cytoplasmic side of the membrane; that stretch reads RFIVRRRRKF…IAYSIVSGGR (357 aa). The region spanning 355–632 is the Protein kinase domain; that stretch reads FKDKDLLGSG…LQYLRGDATL (278 aa). Residues 361–369 and lysine 384 each bind ATP; that span reads LGSGGFGRV. The active-site Proton acceptor is the aspartate 480.

It in the C-terminal section; belongs to the protein kinase superfamily. Ser/Thr protein kinase family. In the N-terminal section; belongs to the leguminous lectin family.

Its subcellular location is the cell membrane. It carries out the reaction L-seryl-[protein] + ATP = O-phospho-L-seryl-[protein] + ADP + H(+). The enzyme catalyses L-threonyl-[protein] + ATP = O-phospho-L-threonyl-[protein] + ADP + H(+). The sequence is that of L-type lectin-domain containing receptor kinase IV.3 (LECRK43) from Arabidopsis thaliana (Mouse-ear cress).